The primary structure comprises 590 residues: Zinc finger protein 285 (590 aa).

The KRAB domain maps to 8–86 (VTFKDVAVVF…WKQRIRDLTV (79 aa)). Residues 232–254 (FPCNNCGVAFADDTDPHVHHSTH) form a C2H2-type 1 zinc finger. The C2H2-type 2; degenerate zinc-finger motif lies at 260–282 (YKCDQYGKNFSQSQDLIVHCKTH). 9 consecutive C2H2-type zinc fingers follow at residues 316-338 (YKCK…HRVH), 344-366 (YKCD…QGVH), 372-394 (YKCE…QRVH), 400-422 (YKCS…WRFH), 428-450 (YRCG…QRVH), 456-478 (YKCN…QRVH), 484-506 (YKCE…QRDH), 512-534 (YKCD…LRVH), and 540-562 (YKCK…QRVH).

The protein belongs to the krueppel C2H2-type zinc-finger protein family.

The protein resides in the nucleus. In terms of biological role, may be involved in transcriptional regulation. This Homo sapiens (Human) protein is Zinc finger protein 285 (ZNF285).